The chain runs to 96 residues: Aspartyl/glutamyl-tRNA(Asn/Gln) amidotransferase subunit C (96 aa).

It belongs to the GatC family. Heterotrimer of A, B and C subunits.

It carries out the reaction L-glutamyl-tRNA(Gln) + L-glutamine + ATP + H2O = L-glutaminyl-tRNA(Gln) + L-glutamate + ADP + phosphate + H(+). It catalyses the reaction L-aspartyl-tRNA(Asn) + L-glutamine + ATP + H2O = L-asparaginyl-tRNA(Asn) + L-glutamate + ADP + phosphate + 2 H(+). Allows the formation of correctly charged Asn-tRNA(Asn) or Gln-tRNA(Gln) through the transamidation of misacylated Asp-tRNA(Asn) or Glu-tRNA(Gln) in organisms which lack either or both of asparaginyl-tRNA or glutaminyl-tRNA synthetases. The reaction takes place in the presence of glutamine and ATP through an activated phospho-Asp-tRNA(Asn) or phospho-Glu-tRNA(Gln). This chain is Aspartyl/glutamyl-tRNA(Asn/Gln) amidotransferase subunit C, found in Sulfurimonas denitrificans (strain ATCC 33889 / DSM 1251) (Thiomicrospira denitrificans (strain ATCC 33889 / DSM 1251)).